Reading from the N-terminus, the 476-residue chain is 2-(3-amino-3-carboxypropyl)histidine synthase subunit 2 (476 aa).

The segment covering 1-15 (MTESAPSAFFTTSTP) has biased composition (polar residues). Residues 1-24 (MTESAPSAFFTTSTPADHVHEEES) are disordered. Cysteine 102, cysteine 123, and cysteine 347 together coordinate [4Fe-4S] cluster. The tract at residues 451–476 (DGVSTAEDSTKMGEGRSGIAQGYSGK) is disordered.

It belongs to the DPH1/DPH2 family. DPH2 subfamily. Component of the 2-(3-amino-3-carboxypropyl)histidine synthase complex composed of dph-1, dph-2, dph-3 and a NADH-dependent reductase. Requires [4Fe-4S] cluster as cofactor.

It functions in the pathway protein modification; peptidyl-diphthamide biosynthesis. Functionally, required for the first step of diphthamide biosynthesis, a post-translational modification of histidine which occurs in elongation factor 2. Dph-1 and dph-2 transfer a 3-amino-3-carboxypropyl (ACP) group from S-adenosyl-L-methionine (SAM) to a histidine residue, the reaction is assisted by a reduction system comprising dph-3 and a NADH-dependent reductase. Facilitates the reduction of the catalytic iron-sulfur cluster found in the dph-1 subunit. The protein is 2-(3-amino-3-carboxypropyl)histidine synthase subunit 2 (dph-2) of Caenorhabditis elegans.